Consider the following 272-residue polypeptide: Short-chain dehydrogenase reductase ATA1 (272 aa).

Residue 14 to 38 coordinates NADP(+); that stretch reads IITGGARGIGAATARLFTENGAYVI. Serine 143 contributes to the substrate binding site. Tyrosine 156 acts as the Proton acceptor in catalysis. Lysine 160 is an NADP(+) binding site.

It belongs to the short-chain dehydrogenases/reductases (SDR) family. In terms of tissue distribution, expressed specifically in tapetal cells.

In terms of biological role, may play a role in tapetum development. This chain is Short-chain dehydrogenase reductase ATA1, found in Arabidopsis thaliana (Mouse-ear cress).